A 179-amino-acid polypeptide reads, in one-letter code: Ribosome maturation factor RimM (179 aa).

In terms of domain architecture, PRC barrel spans 100–176 (HGEYHLTELI…FILLTPPSGL (77 aa)).

The protein belongs to the RimM family. As to quaternary structure, binds ribosomal protein uS19.

It localises to the cytoplasm. An accessory protein needed during the final step in the assembly of 30S ribosomal subunit, possibly for assembly of the head region. Essential for efficient processing of 16S rRNA. May be needed both before and after RbfA during the maturation of 16S rRNA. It has affinity for free ribosomal 30S subunits but not for 70S ribosomes. The sequence is that of Ribosome maturation factor RimM from Prochlorococcus marinus subsp. pastoris (strain CCMP1986 / NIES-2087 / MED4).